Reading from the N-terminus, the 584-residue chain is MNNHIEALSYYLGAFVDELTRLNVCDVVISPGSRSTPIALLMEQHEGMNTYLHVDERSAGFFALGIAKAKKRPVALLCTSGTAAANYYPAVCEAFHSRVPLIVLTADRPHELRDVGAPQAMNQINLYGTFVKQFTEMALPEASEAMYHYARMTTQRMIASACLAPQGPVHLNFPVREPLIPDFSLESLWDKGRGEYTGVVQQGNAVMPSEYVDSLVGRLSHMKKGLIICGDDSHSEIATFATQLAEKTGYPILADPLSNIRSGHHDKTMVIDCYDTFLRNELLKETWKPDVLIRFGGMPVSKALTQFIKKQTKAVHIVVDESGQWRDPALVATEVVQASDIAFCSALIEKMPVMKKNDWFRMWQHINEKTKETLREMETYDTAFEGRVITDIVRVLPEGATLFASNSMPIRDTDSFFFTSDKTIQVMANRGVNGIDGIISTALGASMICDPLVLVIGDLSFYHDLNGLLAAKLHELNITIVVVNNDGGGIFSFLPQYEKKEHFESLFGTPIGLDYEHVVTMYGGSFSRVNGWEQFREEVQKGATTEGLHVVEICTNRDENVTLHRKLWAKTQDVITTSLQGESK.

The protein belongs to the TPP enzyme family. MenD subfamily. In terms of assembly, homodimer. Mg(2+) serves as cofactor. Requires Mn(2+) as cofactor. It depends on thiamine diphosphate as a cofactor.

It carries out the reaction isochorismate + 2-oxoglutarate + H(+) = 5-enolpyruvoyl-6-hydroxy-2-succinyl-cyclohex-3-ene-1-carboxylate + CO2. Its pathway is quinol/quinone metabolism; 1,4-dihydroxy-2-naphthoate biosynthesis; 1,4-dihydroxy-2-naphthoate from chorismate: step 2/7. It functions in the pathway quinol/quinone metabolism; menaquinone biosynthesis. Functionally, catalyzes the thiamine diphosphate-dependent decarboxylation of 2-oxoglutarate and the subsequent addition of the resulting succinic semialdehyde-thiamine pyrophosphate anion to isochorismate to yield 2-succinyl-5-enolpyruvyl-6-hydroxy-3-cyclohexene-1-carboxylate (SEPHCHC). The polypeptide is 2-succinyl-5-enolpyruvyl-6-hydroxy-3-cyclohexene-1-carboxylate synthase (Bacillus thuringiensis subsp. konkukian (strain 97-27)).